We begin with the raw amino-acid sequence, 402 residues long: Succinyl-diaminopimelate desuccinylase (402 aa).

H88 provides a ligand contact to Zn(2+). D90 is an active-site residue. D121 serves as a coordination point for Zn(2+). The active-site Proton acceptor is E155. Zn(2+) is bound by residues E156, E184, and H374.

The protein belongs to the peptidase M20A family. DapE subfamily. As to quaternary structure, homodimer. Zn(2+) is required as a cofactor. It depends on Co(2+) as a cofactor.

It carries out the reaction N-succinyl-(2S,6S)-2,6-diaminopimelate + H2O = (2S,6S)-2,6-diaminopimelate + succinate. The protein operates within amino-acid biosynthesis; L-lysine biosynthesis via DAP pathway; LL-2,6-diaminopimelate from (S)-tetrahydrodipicolinate (succinylase route): step 3/3. Its function is as follows. Catalyzes the hydrolysis of N-succinyl-L,L-diaminopimelic acid (SDAP), forming succinate and LL-2,6-diaminopimelate (DAP), an intermediate involved in the bacterial biosynthesis of lysine and meso-diaminopimelic acid, an essential component of bacterial cell walls. The chain is Succinyl-diaminopimelate desuccinylase from Psychrobacter sp. (strain PRwf-1).